The chain runs to 255 residues: Probable iron chelatin transport ATP-binding protein HP_0888 (255 aa).

Residues 3 to 240 form the ABC transporter domain; sequence LEVKNLSFKY…HNLSALYDTP (238 aa). 35–42 is a binding site for ATP; it reads APNGSGKT.

It belongs to the ABC transporter superfamily.

The protein resides in the cell inner membrane. Part of a binding-protein-dependent transport system for an iron chelatin. Probably responsible for energy coupling to the transport system (Potential). The chain is Probable iron chelatin transport ATP-binding protein HP_0888 from Helicobacter pylori (strain ATCC 700392 / 26695) (Campylobacter pylori).